A 96-amino-acid chain; its full sequence is UPF0235 protein Helmi_20270 (96 aa).

Belongs to the UPF0235 family.

The protein is UPF0235 protein Helmi_20270 of Heliobacterium modesticaldum (strain ATCC 51547 / Ice1).